We begin with the raw amino-acid sequence, 164 residues long: MADNSFDIVSKIDLQEVSNAIQQATKEIQTRFDLKDTKSEIKLEKDAIELHSSDEYKLKAVTDILQGKLVKRNVPLKGLTYGTIESAAGATVRQKITMQQGIPGEKAKEIVRVIKDSKKKAQASIQGDTVRVSSKDRDTLQEIIALIKNKDFGIDVQFTNYRSN.

This sequence belongs to the YajQ family.

In terms of biological role, nucleotide-binding protein. In Koribacter versatilis (strain Ellin345), this protein is Nucleotide-binding protein Acid345_2028.